Reading from the N-terminus, the 389-residue chain is S-adenosylmethionine synthase (389 aa).

His17 contacts ATP. Mg(2+) is bound at residue Asp19. Glu45 is a K(+) binding site. Glu58 and Gln101 together coordinate L-methionine. A flexible loop region spans residues 101 to 111 (QSPDIGQGVDV). ATP contacts are provided by residues 160–162 (DGK), 226–227 (RF), Asp235, 241–242 (RK), Ala258, and Lys262. Asp235 is an L-methionine binding site. Lys266 is a binding site for L-methionine.

Belongs to the AdoMet synthase family. In terms of assembly, homotetramer; dimer of dimers. Mg(2+) serves as cofactor. It depends on K(+) as a cofactor.

The protein resides in the cytoplasm. It catalyses the reaction L-methionine + ATP + H2O = S-adenosyl-L-methionine + phosphate + diphosphate. It functions in the pathway amino-acid biosynthesis; S-adenosyl-L-methionine biosynthesis; S-adenosyl-L-methionine from L-methionine: step 1/1. Its function is as follows. Catalyzes the formation of S-adenosylmethionine (AdoMet) from methionine and ATP. The overall synthetic reaction is composed of two sequential steps, AdoMet formation and the subsequent tripolyphosphate hydrolysis which occurs prior to release of AdoMet from the enzyme. The sequence is that of S-adenosylmethionine synthase from Anaeromyxobacter sp. (strain Fw109-5).